The following is a 633-amino-acid chain: Probable methyltransferase PMT15 (633 aa).

The Cytoplasmic segment spans residues 1-24 (MGNYRWPSKLSKLSLRAKQTNLYR). A helical; Signal-anchor for type II membrane protein transmembrane segment spans residues 25 to 45 (VILIAILCVTFYFVGVWQHSG). Topologically, residues 46–633 (RGISRSSISN…APAPDQSSDP (588 aa)) are lumenal. Residues Asn-113 and Asn-298 are each glycosylated (N-linked (GlcNAc...) asparagine).

It belongs to the methyltransferase superfamily.

The protein localises to the golgi apparatus membrane. The protein is Probable methyltransferase PMT15 of Arabidopsis thaliana (Mouse-ear cress).